Here is a 63-residue protein sequence, read N- to C-terminus: Large ribosomal subunit protein bL35 (63 aa).

The protein belongs to the bacterial ribosomal protein bL35 family.

The sequence is that of Large ribosomal subunit protein bL35 from Campylobacter curvus (strain 525.92).